The chain runs to 854 residues: Envelope glycoprotein B (854 aa).

The first 30 residues, 1 to 30, serve as a signal peptide directing secretion; sequence MSKNWFPLLCASVLVVYVSIASSSTGTASG. The Virion surface portion of the chain corresponds to 31–723; that stretch reads AVTPTSPTEN…EGVVGFIKNP (693 aa). Residues asparagine 40, asparagine 48, and asparagine 60 are each glycosylated (N-linked (GlcNAc...) asparagine; by host). Intrachain disulfides connect cysteine 69-cysteine 524, cysteine 86-cysteine 480, cysteine 160-cysteine 225, cysteine 317-cysteine 364, and cysteine 546-cysteine 583. The tract at residues 127 to 133 is involved in fusion and/or binding to host membrane; that stretch reads SYSFIRE. Asparagine 183 carries N-linked (GlcNAc...) asparagine; by host glycosylation. The segment at 212 to 219 is involved in fusion and/or binding to host membrane; that stretch reads GSTWLYTT. Asparagine 256, asparagine 275, asparagine 314, asparagine 356, asparagine 378, asparagine 382, asparagine 390, asparagine 423, asparagine 426, asparagine 442, asparagine 558, and asparagine 595 each carry an N-linked (GlcNAc...) asparagine; by host glycan. 2 hydrophobic membrane proximal region regions span residues 669–721 and 700–720; these read VEGK…GFIK and VAIG…VGFI. Residues 724–744 form a helical membrane-spanning segment; sequence FGSFTVILFLLAVLGVIYLIY. Topologically, residues 745 to 854 are intravirion; sequence MRQKRAYEKP…YQKIQNEYEV (110 aa).

It belongs to the herpesviridae glycoprotein B family. Homotrimer; disulfide-linked. Binds to heparan sulfate proteoglycans. Interacts with gH/gL heterodimer. A proteolytic cleavage by host furin generates two subunits that remain linked by disulfide bonds.

Its subcellular location is the virion membrane. It localises to the host cell membrane. It is found in the host endosome membrane. The protein localises to the host Golgi apparatus membrane. Functionally, envelope glycoprotein that forms spikes at the surface of virion envelope. Essential for the initial attachment to heparan sulfate moieties of the host cell surface proteoglycans. Involved in fusion of viral and cellular membranes leading to virus entry into the host cell. Following initial binding to its host receptors, membrane fusion is mediated by the fusion machinery composed at least of gB and the heterodimer gH/gL. May be involved in the fusion between the virion envelope and the outer nuclear membrane during virion egress. The sequence is that of Envelope glycoprotein B from Macaca mulatta (Rhesus macaque).